The chain runs to 498 residues: ATP synthase subunit beta, chloroplastic (498 aa).

Position 172–179 (172–179 (GGAGVGKT)) interacts with ATP.

The protein belongs to the ATPase alpha/beta chains family. In terms of assembly, F-type ATPases have 2 components, CF(1) - the catalytic core - and CF(0) - the membrane proton channel. CF(1) has five subunits: alpha(3), beta(3), gamma(1), delta(1), epsilon(1). CF(0) has four main subunits: a(1), b(1), b'(1) and c(9-12).

It localises to the plastid. It is found in the chloroplast thylakoid membrane. It catalyses the reaction ATP + H2O + 4 H(+)(in) = ADP + phosphate + 5 H(+)(out). Produces ATP from ADP in the presence of a proton gradient across the membrane. The catalytic sites are hosted primarily by the beta subunits. This is ATP synthase subunit beta, chloroplastic from Zea mays (Maize).